A 940-amino-acid chain; its full sequence is MAKKKFVENTNWKKIDTDNQLIFEQGGFLGLEEIDPNDYFLTDKNVDKIEKQQKQKQKQEQEQEQKPTNKLTTKSTTKSTPVQNKNQKPVDKKRKSKKGNDDSDNEYSGYQDDSDQDDEYSAAKKKPRIIKPTETVDMGTELLNSFVEGTVHNKKKQRKGIKVKQIIDDNDNDFEDEEEEVKPQQKLQKQKQQEQKQKQPQKQPQQPNKKNNKKELQKEEEEQMEEEKEEEEVQQEEEEEKEIKKPIKEKKVKTQKQIEAAKKNINKLEKIKKRKEISEQKTISKEEQDQLDMSEWNSYNLDPLILKGLRSLGFSKPTEIQSSVIPVAVSSGYDVIGAAQTGSGKTLAFGIPMVQRILQHLRKHGQNVENKANKQQNDNDDENEDVEEEEEEEEEEGRSKEYRKLFSLVICPTRELAIQVTNHIKSIISHTNLKVISIVGGMASQRQQRVLSKRPEIVVATPGRLWELITEGHQHLVELESLLCLGIDEADRMVEQGHFAELESILKTLPIHRTAMSKKERLKKKETEEKRNKRRKVDKLNDKGEMIKGDQDDMDDQIPDEEMEELEQEEQNHLTTTHKRQTFVFSATLVNIPGDGAPTSQKKKYRKLTPIENLIEKVRFQRDYKLIDVTQKRLTAKNLLETKIFCNLEEKDMYLYYFVERYPGRTLVFVNSIDCARRLIPIFNILEVPVFALHAQMQQKQRLKNLDRFRTLDNVVLIATDVAARGLDIPLVQHVIHYQVPRTTQLYIHRSGRTARSDQDGISVVLVTPKERPLYIKLDSSIEHDIGNFPTDIRYMEGVRDRIELAKEIDKLSHQSLKDNREKSWFKKQAEEMDIELDGDFFGENSDDEQSEDTRIAEQKKQFKLKQLRAQLKHLLSRSLLPRGVSQSYITASAIQELESKSQSSAATDFSNKAKNVIGKKAKQLAIENHSKFLTKNKKK.

Positions 42 to 66 form a coiled coil; the sequence is TDKNVDKIEKQQKQKQKQEQEQEQK. Residues 50–67 show a composition bias toward basic and acidic residues; it reads EKQQKQKQKQEQEQEQKP. Residues 50–243 form a disordered region; the sequence is EKQQKQKQKQ…QQEEEEEKEI (194 aa). Residues 68 to 81 show a composition bias toward low complexity; the sequence is TNKLTTKSTTKSTP. Positions 152–162 are enriched in basic residues; that stretch reads HNKKKQRKGIK. The segment covering 168–180 has biased composition (acidic residues); the sequence is DDNDNDFEDEEEE. Low complexity predominate over residues 198–209; that stretch reads KQPQKQPQQPNK. Residues 218–240 are compositionally biased toward acidic residues; it reads KEEEEQMEEEKEEEEVQQEEEEE. Residues 294-322 carry the Q motif motif; that stretch reads SEWNSYNLDPLILKGLRSLGFSKPTEIQS. One can recognise a Helicase ATP-binding domain in the interval 326-607; that stretch reads PVAVSSGYDV…PTSQKKKYRK (282 aa). An ATP-binding site is contributed by 339-346; that stretch reads AQTGSGKT. The interval 364 to 398 is disordered; sequence HGQNVENKANKQQNDNDDENEDVEEEEEEEEEEGR. The span at 367–376 shows a compositional bias: polar residues; that stretch reads NVENKANKQQ. The span at 378 to 396 shows a compositional bias: acidic residues; sequence DNDDENEDVEEEEEEEEEE. Positions 488–491 match the DEAD box motif; the sequence is DEAD. 2 stretches are compositionally biased toward basic and acidic residues: residues 517–531 and 538–551; these read SKKERLKKKETEEKR and DKLNDKGEMIKGDQ. The tract at residues 517-556 is disordered; it reads SKKERLKKKETEEKRNKRRKVDKLNDKGEMIKGDQDDMDD. A Helicase C-terminal domain is found at 650-797; the sequence is EKDMYLYYFV…NFPTDIRYME (148 aa).

The protein belongs to the DEAD box helicase family. DDX24/MAK5 subfamily.

The catalysed reaction is ATP + H2O = ADP + phosphate + H(+). ATP-dependent RNA helicase. In Dictyostelium discoideum (Social amoeba), this protein is ATP-dependent RNA helicase ddx24 (ddx24).